Here is a 103-residue protein sequence, read N- to C-terminus: UPF0091 protein PH0944 (103 aa).

Belongs to the UPF0091 family.

In Pyrococcus horikoshii (strain ATCC 700860 / DSM 12428 / JCM 9974 / NBRC 100139 / OT-3), this protein is UPF0091 protein PH0944.